The chain runs to 192 residues: Large ribosomal subunit protein bL9 (192 aa).

The segment at 173–192 is disordered; sequence ALRPEDFFDPEADGLDENEA. Residues 179–192 are compositionally biased toward acidic residues; sequence FFDPEADGLDENEA.

The protein belongs to the bacterial ribosomal protein bL9 family.

Its function is as follows. Binds to the 23S rRNA. The polypeptide is Large ribosomal subunit protein bL9 (Rhizobium etli (strain ATCC 51251 / DSM 11541 / JCM 21823 / NBRC 15573 / CFN 42)).